The chain runs to 135 residues: DNA-binding protein inhibitor ID-2-B (135 aa).

Residues 23-75 (ARSKAPVDEPMSLLYNMNDCYSKLKELVPSIPPNKKVSKMEILQHVIDYILDL) form the bHLH domain. The short motif at 108-117 (LNTDISILSL) is the Nuclear export signal element.

In terms of assembly, heterodimer with other HLH proteins.

It localises to the cytoplasm. The protein resides in the nucleus. Functionally, transcriptional regulator (lacking a basic DNA binding domain) which negatively regulates the basic helix-loop-helix (bHLH) transcription factors by forming heterodimers and inhibiting their DNA binding and transcriptional activity. Inhibits the activity of both neurogenic (neurod1/neuroD) and myogenic (myod1/myoD) bHLH factors. May play a role in the regulation of the circadian clock. The chain is DNA-binding protein inhibitor ID-2-B (id2-b) from Xenopus laevis (African clawed frog).